The chain runs to 327 residues: D-alanine--D-alanine ligase (327 aa).

Positions lysine 113 to alanine 312 constitute an ATP-grasp domain. Residue valine 139–threonine 194 participates in ATP binding. Residues aspartate 266, glutamate 279, and asparagine 281 each contribute to the Mg(2+) site.

It belongs to the D-alanine--D-alanine ligase family. It depends on Mg(2+) as a cofactor. Mn(2+) is required as a cofactor.

It localises to the cytoplasm. The enzyme catalyses 2 D-alanine + ATP = D-alanyl-D-alanine + ADP + phosphate + H(+). The protein operates within cell wall biogenesis; peptidoglycan biosynthesis. Functionally, cell wall formation. This chain is D-alanine--D-alanine ligase, found in Cupriavidus pinatubonensis (strain JMP 134 / LMG 1197) (Cupriavidus necator (strain JMP 134)).